A 447-amino-acid polypeptide reads, in one-letter code: Membrane metalloprotease ARASP, chloroplastic (447 aa).

A chloroplast-targeting transit peptide spans 1 to 73 (MLLNISSSPI…YPDGERFDFR (73 aa)). Residue His-102 coordinates Zn(2+). Glu-103 is an active-site residue. Zn(2+) is bound at residue His-106. A helical transmembrane segment spans residues 177 to 197 (SIVVSAGIIANVIFAYAIIFV). A PDZ domain is found at 202 to 244 (VGLPVQEAFPGVLVPEVKTFSAASRDGLLSGDVILAVDGTELS). The next 2 helical transmembrane spans lie at 379–399 (LAVI…ALIL) and 413–433 (VEQG…LFLI).

This sequence belongs to the peptidase M50A family. Zn(2+) is required as a cofactor. In terms of tissue distribution, expressed in green seedlings and cotyledons. Low levels of expression in roots, siliques and seeds.

It localises to the plastid. The protein resides in the chloroplast inner membrane. Its function is as follows. Metalloprotease essential for chloroplast and plant development. May be involved in regulated intramembrane proteolysis (RIP). This is Membrane metalloprotease ARASP, chloroplastic from Arabidopsis thaliana (Mouse-ear cress).